A 631-amino-acid polypeptide reads, in one-letter code: Serine/threonine-protein kinase PLK3 (631 aa).

The disordered stretch occupies residues 1-59; that stretch reads MEPAAGFLSPRPFPRAAVPSAPPAGPGPPANASPRSEPEVLAGPRAPDPPGRLITDPLS. Over residues 20–31 the composition is skewed to pro residues; that stretch reads SAPPAGPGPPAN. The 253-residue stretch at 63 to 315 folds into the Protein kinase domain; it reads YTKGRLLGKG…IEQILRHDFF (253 aa). Residues 69–77 and K92 contribute to the ATP site; that span reads LGKGGFARC. D186 acts as the Proton acceptor in catalysis. POLO box domains lie at 448 to 526 and 547 to 630; these read WVSK…YMEQ and LLLQ…DQSP.

This sequence belongs to the protein kinase superfamily. Ser/Thr protein kinase family. CDC5/Polo subfamily. As to quaternary structure, interacts (via the POLO-box domain) with CIB1; leading to inhibit PLK3 kinase activity. Interacts with GOLGB1. In terms of processing, phosphorylated in an ATM-dependent manner following DNA damage. Phosphorylated as cells enter mitosis and dephosphorylated as cells exit mitosis. As to expression, expressed in skin.

It localises to the cytoplasm. The protein localises to the nucleus. The protein resides in the nucleolus. Its subcellular location is the golgi apparatus. It is found in the cytoskeleton. It localises to the microtubule organizing center. The protein localises to the centrosome. It catalyses the reaction L-seryl-[protein] + ATP = O-phospho-L-seryl-[protein] + ADP + H(+). The enzyme catalyses L-threonyl-[protein] + ATP = O-phospho-L-threonyl-[protein] + ADP + H(+). Serine/threonine-protein kinase involved in cell cycle regulation, response to stress and Golgi disassembly. Polo-like kinases act by binding and phosphorylating proteins that are already phosphorylated on a specific motif recognized by the POLO box domains. Phosphorylates ATF2, BCL2L1, CDC25A, CDC25C, CHEK2, HIF1A, JUN, p53/TP53, p73/TP73, PTEN, TOP2A and VRK1. Involved in cell cycle regulation: required for entry into S phase and cytokinesis. Phosphorylates BCL2L1, leading to regulate the G2 checkpoint and progression to cytokinesis during mitosis. Plays a key role in response to stress: rapidly activated upon stress stimulation, such as ionizing radiation, reactive oxygen species (ROS), hyperosmotic stress, UV irradiation and hypoxia. Involved in DNA damage response and G1/S transition checkpoint by phosphorylating CDC25A, p53/TP53 and p73/TP73. Phosphorylates p53/TP53 in response to reactive oxygen species (ROS), thereby promoting p53/TP53-mediated apoptosis. Phosphorylates CHEK2 in response to DNA damage, promoting the G2/M transition checkpoint. Phosphorylates the transcription factor p73/TP73 in response to DNA damage, leading to inhibit p73/TP73-mediated transcriptional activation and pro-apoptotic functions. Phosphorylates HIF1A and JUN is response to hypoxia. Phosphorylates ATF2 following hyperosmotic stress in corneal epithelium. Also involved in Golgi disassembly during the cell cycle: part of a MEK1/MAP2K1-dependent pathway that induces Golgi fragmentation during mitosis by mediating phosphorylation of VRK1. May participate in endomitotic cell cycle, a form of mitosis in which both karyokinesis and cytokinesis are interrupted and is a hallmark of megakaryocyte differentiation, via its interaction with CIB1. The protein is Serine/threonine-protein kinase PLK3 (Plk3) of Mus musculus (Mouse).